A 185-amino-acid chain; its full sequence is Ribosome-recycling factor (185 aa).

It belongs to the RRF family.

It localises to the cytoplasm. In terms of biological role, responsible for the release of ribosomes from messenger RNA at the termination of protein biosynthesis. May increase the efficiency of translation by recycling ribosomes from one round of translation to another. The chain is Ribosome-recycling factor from Acidothermus cellulolyticus (strain ATCC 43068 / DSM 8971 / 11B).